Here is a 266-residue protein sequence, read N- to C-terminus: Putative [LysW]-aminoadipate/[LysW]-glutamate kinase (266 aa).

Substrate contacts are provided by residues 36–37, Arg-63, and Asn-168; that span reads GG.

It belongs to the acetylglutamate kinase family. LysZ subfamily.

Its subcellular location is the cytoplasm. It catalyses the reaction [amino-group carrier protein]-C-terminal-N-(1,4-dicarboxybutan-1-yl)-L-glutamine + ATP = [amino-group carrier protein]-C-terminal-N-(1-carboxy-5-phosphooxy-5-oxopentan-1-yl)-L-glutamine + ADP. The catalysed reaction is [amino-group carrier protein]-C-terminal-gamma-(L-glutamyl)-L-glutamate + ATP = [amino-group carrier protein]-C-terminal-gamma-(5-phospho-L-glutamyl)-L-glutamate + ADP. The protein operates within amino-acid biosynthesis; L-lysine biosynthesis via AAA pathway; L-lysine from L-alpha-aminoadipate (Thermus route): step 2/5. Its pathway is amino-acid biosynthesis; L-arginine biosynthesis. Its function is as follows. Involved in both the arginine and lysine biosynthetic pathways. Phosphorylates the LysW-bound precursors glutamate (for arginine biosynthesis), respectively alpha-aminoadipate (for lysine biosynthesis). This Cenarchaeum symbiosum (strain A) protein is Putative [LysW]-aminoadipate/[LysW]-glutamate kinase.